A 307-amino-acid polypeptide reads, in one-letter code: Deaminated glutathione amidase, chloroplastic/cytosolic (307 aa).

The N-terminal 36 residues, 1-36 (MNAYSVSLDFTKPSLFTRITLSSQIPLTMATTVNKT), are a transit peptide targeting the chloroplast. In terms of domain architecture, CN hydrolase spans 37 to 286 (VRVAAAQMTS…TGIVVADIDF (250 aa)). Glu76 functions as the Proton acceptor in the catalytic mechanism. The Proton donor role is filled by Lys147. The active-site Nucleophile is Cys188.

It belongs to the nitrilase superfamily. NIT1/NIT2 family.

Its subcellular location is the plastid. The protein resides in the chloroplast. The protein localises to the cytoplasm. It carries out the reaction N-(4-oxoglutaryl)-L-cysteinylglycine + H2O = L-cysteinylglycine + 2-oxoglutarate. It catalyses the reaction N-(4-carboxy-4-oxobutanoyl)-L-ethylglycylglycine + H2O = N-(2-aminobutanoyl)glycine + 2-oxoglutarate. Its function is as follows. Catalyzes the hydrolysis of the amide bond in N-(4-oxoglutarate)-L-cysteinylglycine (deaminated glutathione), a metabolite repair reaction to dispose of the harmful deaminated glutathione. Possesses amidase activity toward deaminated ophthalmate in vitro. The polypeptide is Deaminated glutathione amidase, chloroplastic/cytosolic (Arabidopsis thaliana (Mouse-ear cress)).